Here is a 459-residue protein sequence, read N- to C-terminus: Sulfite oxidase (459 aa).

In terms of domain architecture, Cytochrome b5 heme-binding spans 4–83 (YPRYTREEVG…LQQYKVGELS (80 aa)). Heme b is bound by residues histidine 40, histidine 65, and histidine 69. Positions 83 to 115 (SPDEAPAAPDAQDPFAGDPPRHPGLRVNSQKPF) are disordered. Residues 85–100 (DEAPAAPDAQDPFAGD) show a composition bias toward low complexity. Residues 86 to 95 (EAPAAPDAQD) are hinge. Residues 96–323 (PFAGDPPRHP…PSRWQQNDYK (228 aa)) are moco domain. Mo-molybdopterin contacts are provided by residues 136-140 (FTRNH), cysteine 185, aspartate 244, histidine 283, arginine 288, and 299-301 (SVK). The tract at residues 324–459 (GFSPCVDWDT…RGVLSTAWHR (136 aa)) is homodimerization.

As to quaternary structure, homodimer. The cofactor is heme b. Requires Mo-molybdopterin as cofactor.

It is found in the mitochondrion intermembrane space. It catalyses the reaction sulfite + O2 + H2O = sulfate + H2O2. It participates in energy metabolism; sulfur metabolism. In terms of biological role, catalyzes the oxidation of sulfite to sulfate, the terminal reaction in the oxidative degradation of sulfur-containing amino acids. This chain is Sulfite oxidase (SUOX), found in Gallus gallus (Chicken).